We begin with the raw amino-acid sequence, 392 residues long: DNA polymerase IV (392 aa).

In terms of domain architecture, UmuC spans 6-186 (IVHLDADAFF…LPIGKLPGVG (181 aa)). D10 and D103 together coordinate Mg(2+). E104 is an active-site residue.

It belongs to the DNA polymerase type-Y family. Monomer. Mg(2+) is required as a cofactor.

It is found in the cytoplasm. The enzyme catalyses DNA(n) + a 2'-deoxyribonucleoside 5'-triphosphate = DNA(n+1) + diphosphate. In terms of biological role, poorly processive, error-prone DNA polymerase involved in untargeted mutagenesis. Copies undamaged DNA at stalled replication forks, which arise in vivo from mismatched or misaligned primer ends. These misaligned primers can be extended by PolIV. Exhibits no 3'-5' exonuclease (proofreading) activity. May be involved in translesional synthesis, in conjunction with the beta clamp from PolIII. The chain is DNA polymerase IV from Opitutus terrae (strain DSM 11246 / JCM 15787 / PB90-1).